Consider the following 458-residue polypeptide: MPN domain-containing protein (458 aa).

Residues Met1–Arg37 are disordered. A compositionally biased stretch (acidic residues) spans Glu14–Asp28. Residues Thr42–Tyr137 enclose the RAMA domain. Positions 94, 96, and 116 each coordinate DNA. A disordered region spans residues Ser147 to Ser175. Over residues Glu148–Glu161 the composition is skewed to acidic residues. The MPN domain maps to Val229 to Val364. Zn(2+)-binding residues include His306, His308, and Asp319. The short motif at His306–Asp319 is the JAMM motif element.

It belongs to the peptidase M67 family. In terms of processing, degraded following binding to N(6)-methyladenosine methylated DNA (m6A).

In terms of biological role, probable protease. Acts as a sensor of N(6)-methyladenosine methylation on DNA (m6A): recognizes and binds m6A DNA, leading to its degradation. Binds only double strand DNA (dsDNA) in a sequence-independent manner. This Danio rerio (Zebrafish) protein is MPN domain-containing protein.